Consider the following 400-residue polypeptide: Deoxyguanosinetriphosphate triphosphohydrolase-like protein (400 aa).

Residues 73-215 (RLTHSIEVSQ…AAIADDIAYN (143 aa)) enclose the HD domain.

The protein belongs to the dGTPase family. Type 2 subfamily.

This is Deoxyguanosinetriphosphate triphosphohydrolase-like protein from Bartonella tribocorum (strain CIP 105476 / IBS 506).